We begin with the raw amino-acid sequence, 67 residues long: ORF2p protein (67 aa).

The interval 13–18 (WIGHPV) is important for viral replication in intestinal cells. The segment at 22-38 (AIIYPFVGFIPLSLKEV) is a transmembrane helix.

The protein resides in the host cytoplasmic vesicle membrane. Functionally, facilitates virus release from intestinal cells in vitro, possibly through the host autophagic pathway. The protein is ORF2p protein of Homo sapiens (Human).